Consider the following 605-residue polypeptide: UvrABC system protein C (605 aa).

A GIY-YIG domain is found at 14–92; it reads QSCGVYKMVG…IKSLKPLYNI (79 aa). A UVR domain is found at 202–237; sequence KEVKEQLLFTMRKCSSEENYELAAIYRDRVKFLEQI.

This sequence belongs to the UvrC family. In terms of assembly, interacts with UvrB in an incision complex.

It localises to the cytoplasm. Its function is as follows. The UvrABC repair system catalyzes the recognition and processing of DNA lesions. UvrC both incises the 5' and 3' sides of the lesion. The N-terminal half is responsible for the 3' incision and the C-terminal half is responsible for the 5' incision. This Wolbachia pipientis wMel protein is UvrABC system protein C.